A 454-amino-acid chain; its full sequence is Cysteine--tRNA ligase (454 aa).

A Zn(2+)-binding site is contributed by Cys-27. Positions 29–39 (PTVQDHFHIGH) match the 'HIGH' region motif. Asp-207, His-232, and Glu-236 together coordinate Zn(2+). Residues 265–269 (KMSKS) carry the 'KMSKS' region motif. Lys-268 contributes to the ATP binding site.

It belongs to the class-I aminoacyl-tRNA synthetase family. The cofactor is Zn(2+).

It is found in the cytoplasm. The enzyme catalyses tRNA(Cys) + L-cysteine + ATP = L-cysteinyl-tRNA(Cys) + AMP + diphosphate. This chain is Cysteine--tRNA ligase, found in Thermoplasma volcanium (strain ATCC 51530 / DSM 4299 / JCM 9571 / NBRC 15438 / GSS1).